Reading from the N-terminus, the 152-residue chain is Cysteine and tyrosine-rich protein 1 (152 aa).

The first 27 residues, 1–27 (MDIPRSLRHPEILLVLLLSEITDICQA), serve as a signal peptide directing secretion. Residues 28 to 59 (YCEADCKSYCCDGTPPYCCSYYAYIGNVLSGT) lie on the Extracellular side of the membrane. A helical transmembrane segment spans residues 60-80 (AIAGIVFGIVFIMGVIAGIAI). Over 81–152 (CICMCMKSSR…PPPYPGPSRK (72 aa)) the chain is Cytoplasmic. The tract at residues 130–152 (PYTPTPPMSHYPSPPPYPGPSRK) is disordered.

This sequence belongs to the CYYR1 family.

It localises to the membrane. In Xenopus laevis (African clawed frog), this protein is Cysteine and tyrosine-rich protein 1 (cyyr1).